Here is a 222-residue protein sequence, read N- to C-terminus: MSTSSSASALGRRAGPLDGLIGEIDRALRVLSGAATAARPYPAQAPEAPDALSERERRHAAGLMRVNHVGEVCAQALYRGQAAACREPAARELLRQAAAEEVDHLAWCNERLRELGSRPSLLNPFWYTGSFALGVLASYAGVPRNLGFMAETERQVEAHLDGHLRTLPVQDRRSRDIVQKMKEDEAQHRASAERAGGVPLPAPVRGAMRAMSKVMTSTAYWL.

Residues Glu71, Glu101, His104, Glu153, Glu185, and His188 each coordinate Fe cation.

It belongs to the COQ7 family. It depends on Fe cation as a cofactor.

It is found in the cell membrane. It catalyses the reaction a 5-methoxy-2-methyl-3-(all-trans-polyprenyl)benzene-1,4-diol + AH2 + O2 = a 3-demethylubiquinol + A + H2O. It participates in cofactor biosynthesis; ubiquinone biosynthesis. Catalyzes the hydroxylation of 2-nonaprenyl-3-methyl-6-methoxy-1,4-benzoquinol during ubiquinone biosynthesis. This Bordetella bronchiseptica (strain ATCC BAA-588 / NCTC 13252 / RB50) (Alcaligenes bronchisepticus) protein is 3-demethoxyubiquinol 3-hydroxylase.